A 421-amino-acid polypeptide reads, in one-letter code: UV-B-induced protein At3g17800, chloroplastic (421 aa).

Disordered regions lie at residues 1–40 (MDAL…RSGS) and 74–95 (VRAS…IAPL). The N-terminal 75 residues, 1-75 (MDALTSSLVR…AKTRRSFVVR (75 aa)), are a transit peptide targeting the chloroplast. Polar residues predominate over residues 16–28 (SRTSDNGSGSMFL). Residues 74-88 (VRASSASNDASSGSS) show a composition bias toward low complexity.

The protein localises to the plastid. It is found in the chloroplast. This is UV-B-induced protein At3g17800, chloroplastic from Arabidopsis thaliana (Mouse-ear cress).